Reading from the N-terminus, the 88-residue chain is Small ribosomal subunit protein uS15c (88 aa).

It belongs to the universal ribosomal protein uS15 family. Part of the 30S ribosomal subunit.

It is found in the plastid. The protein localises to the chloroplast. The sequence is that of Small ribosomal subunit protein uS15c (rps15) from Crucihimalaya wallichii (Rock-cress).